Consider the following 231-residue polypeptide: Deoxyribose-phosphate aldolase (231 aa).

The Proton donor/acceptor role is filled by aspartate 97. The active-site Schiff-base intermediate with acetaldehyde is the lysine 162. The active-site Proton donor/acceptor is the lysine 191.

Belongs to the DeoC/FbaB aldolase family. DeoC type 1 subfamily.

It is found in the cytoplasm. The enzyme catalyses 2-deoxy-D-ribose 5-phosphate = D-glyceraldehyde 3-phosphate + acetaldehyde. It functions in the pathway carbohydrate degradation; 2-deoxy-D-ribose 1-phosphate degradation; D-glyceraldehyde 3-phosphate and acetaldehyde from 2-deoxy-alpha-D-ribose 1-phosphate: step 2/2. Its function is as follows. Catalyzes a reversible aldol reaction between acetaldehyde and D-glyceraldehyde 3-phosphate to generate 2-deoxy-D-ribose 5-phosphate. This Caldanaerobacter subterraneus subsp. tengcongensis (strain DSM 15242 / JCM 11007 / NBRC 100824 / MB4) (Thermoanaerobacter tengcongensis) protein is Deoxyribose-phosphate aldolase.